The sequence spans 222 residues: Kinetochore protein Spc25 (222 aa).

Residues 51–100 are a coiled coil; it reads RHQRKVGKLQKVIMERREELDKRVSFIEELDRELEATKLRSLAMKDRIKQ.

Belongs to the SPC25 family. As to quaternary structure, component of the Ndc80 complex, which is composed of Ndc80, Nuf2 and Spc25.

It localises to the nucleus. It is found in the chromosome. The protein resides in the centromere. The protein localises to the kinetochore. Its function is as follows. Acts as a component of the essential kinetochore-associated Ndc80 complex, which is required for chromosome segregation and spindle checkpoint activity during meiosis and mitosis. Required for kinetochore integrity and the organization of stable microtubule binding sites in the outer plate of the kinetochore. Participates in SAC signaling that responds specifically to disruptions in spindle microtubule dynamics. The NDC80 complex synergistically enhances the affinity of the SKA1 complex for microtubules and may allow the NDC80 complex to track depolymerizing microtubules. The chain is Kinetochore protein Spc25 from Drosophila sechellia (Fruit fly).